Here is a 548-residue protein sequence, read N- to C-terminus: Formyltransferase/hydrolase complex Fhc subunit A (548 aa).

Residues His57, His59, and His227 each coordinate Zn(2+).

The protein belongs to the metallo-dependent hydrolases superfamily. FwdA/FmdA family. In terms of assembly, octaheteromer. Part of the formyltransferase/hydrolase complex fhc; composed of FhcA, FhcB, FhcC and FhcD. Zn(2+) is required as a cofactor.

Its subcellular location is the cytoplasm. It catalyses the reaction N-formylmethanofuran + H2O = methanofuran + formate. It participates in one-carbon metabolism; formaldehyde degradation; formate from formaldehyde (H(4)MPT route): step 4/5. Involved in the transformation of 5-formyl tetrahydromethanopterin (5-formyl-H(4)MPT) to methanofuran (MFR) and formate via the formylmethanofuran (formyl-MFR). May be catalyze the hydrolysis of formylmethanofuran (formyl-MFR) to yield formate and MFR. In Methylorubrum extorquens (strain ATCC 14718 / DSM 1338 / JCM 2805 / NCIMB 9133 / AM1) (Methylobacterium extorquens), this protein is Formyltransferase/hydrolase complex Fhc subunit A (fhcA).